The sequence spans 657 residues: tRNA 5-methylaminomethyl-2-thiouridine biosynthesis bifunctional protein MnmC (657 aa).

The tract at residues 1-235 (MSDAHNAQLD…KREMLAGPFQ (235 aa)) is tRNA (mnm(5)s(2)U34)-methyltransferase. An FAD-dependent cmnm(5)s(2)U34 oxidoreductase region spans residues 261–657 (IGAGLAGCAT…QLIRGTGSPT (397 aa)).

The protein in the N-terminal section; belongs to the methyltransferase superfamily. tRNA (mnm(5)s(2)U34)-methyltransferase family. This sequence in the C-terminal section; belongs to the DAO family. FAD is required as a cofactor.

It is found in the cytoplasm. The catalysed reaction is 5-aminomethyl-2-thiouridine(34) in tRNA + S-adenosyl-L-methionine = 5-methylaminomethyl-2-thiouridine(34) in tRNA + S-adenosyl-L-homocysteine + H(+). Functionally, catalyzes the last two steps in the biosynthesis of 5-methylaminomethyl-2-thiouridine (mnm(5)s(2)U) at the wobble position (U34) in tRNA. Catalyzes the FAD-dependent demodification of cmnm(5)s(2)U34 to nm(5)s(2)U34, followed by the transfer of a methyl group from S-adenosyl-L-methionine to nm(5)s(2)U34, to form mnm(5)s(2)U34. In Ectopseudomonas mendocina (strain ymp) (Pseudomonas mendocina), this protein is tRNA 5-methylaminomethyl-2-thiouridine biosynthesis bifunctional protein MnmC.